The chain runs to 382 residues: Neuropeptide Y receptor type 1 (382 aa).

The Extracellular portion of the chain corresponds to 1-33 (MNSTLFSRVENYSVHYNVSENSPFLAFENDDCH). N-linked (GlcNAc...) asparagine glycosylation is found at N2, N11, and N17. Residues 34-54 (LPLAVIFTLALAYGAVIILGV) traverse the membrane as a helical segment. At 55-75 (SGNLALIIIILKQKEMRNVTN) the chain is on the cytoplasmic side. The chain crosses the membrane as a helical span at residues 76–96 (ILIVNLSFSDLLVAVMCLPFT). The Extracellular segment spans residues 97 to 115 (FVYTLMDHWVFGETMCKLN). C112 and C197 are oxidised to a cystine. Residues 116 to 136 (PFVQCVSITVSIFSLVLIAVE) traverse the membrane as a helical segment. Residues 137–153 (RHQLIINPRGWRPNNRH) lie on the Cytoplasmic side of the membrane. The chain crosses the membrane as a helical span at residues 154-174 (AYIGITVIWVLAVASSLPFVI). Topologically, residues 175 to 210 (YQILTDEPFQNVSLAAFKDKYVCFDKFPSDSHRLSY) are extracellular. Residues 211–231 (TTLLLVLQYFGPLCFIFICYF) form a helical membrane-spanning segment. Residues 232–259 (KIYIRLKRRNNMMDKIRDSKYRSSETKR) lie on the Cytoplasmic side of the membrane. A helical membrane pass occupies residues 260 to 280 (INVMLLSIVVAFAVCWLPLTI). Topologically, residues 281 to 298 (FNTVFDWNHQIIATCNHN) are extracellular. Residues 299–319 (LLFLLCHLTAMISTCVNPIFY) traverse the membrane as a helical segment. Over 320-382 (GFLNKNFQRD…KISMNDNEKI (63 aa)) the chain is Cytoplasmic. C337 is lipidated: S-palmitoyl cysteine. A phosphoserine mark is found at S367 and S375.

This sequence belongs to the G-protein coupled receptor 1 family. As to expression, brain.

Its subcellular location is the cell membrane. In terms of biological role, receptor for neuropeptide Y and peptide YY. This Rattus norvegicus (Rat) protein is Neuropeptide Y receptor type 1 (Npy1r).